A 358-amino-acid chain; its full sequence is Methionine aminopeptidase 2 (358 aa).

H109 serves as a coordination point for substrate. A divalent metal cation contacts are provided by D130, D141, and H210. A substrate-binding site is contributed by H218. 2 residues coordinate a divalent metal cation: E243 and E339.

The protein belongs to the peptidase M24A family. Methionine aminopeptidase eukaryotic type 2 subfamily. Requires Co(2+) as cofactor. Zn(2+) serves as cofactor. The cofactor is Mn(2+). It depends on Fe(2+) as a cofactor.

The protein localises to the cytoplasm. It carries out the reaction Release of N-terminal amino acids, preferentially methionine, from peptides and arylamides.. Cotranslationally removes the N-terminal methionine from nascent proteins. The N-terminal methionine is often cleaved when the second residue in the primary sequence is small and uncharged (Met-Ala-, Cys, Gly, Pro, Ser, Thr, or Val). This is Methionine aminopeptidase 2 from Encephalitozoon cuniculi (strain GB-M1) (Microsporidian parasite).